A 700-amino-acid polypeptide reads, in one-letter code: Calpain-2 catalytic subunit (700 aa).

N-acetylalanine is present on A2. The propeptide at 2–19 (AGIAAKLAKDREAAEGLG) is anchors to the small subunit. In terms of domain architecture, Calpain catalytic spans 45-344 (LFQDPSFPAI…YSRLEICNLT (300 aa)). I89, G91, and D96 together coordinate Ca(2+). C105 is an active-site residue. Residues E175, Q229, and K230 each coordinate Ca(2+). Active-site residues include H262 and N286. 3 residues coordinate Ca(2+): E292, D299, and E323. The interval 345–514 (PDTLTSDTYK…KKADYQAVDD (170 aa)) is domain III. Positions 515–529 (EIEANLEEFDISEDD) are linker. The domain IV stretch occupies residues 530–700 (IDDGFRRLFA…LISWLCFSVL (171 aa)). Ca(2+) contacts are provided by A542, D545, E547, E552, D585, D587, S589, K591, E596, D615, D617, S619, T621, E626, D658, and N661. EF-hand domains lie at 572–605 (FSIE…TKIQ) and 602–637 (TKIQ…AGFK). One can recognise an EF-hand 3 domain in the interval 667–700 (VRLETLFKIFKQLDPENTGTIELDLISWLCFSVL).

This sequence belongs to the peptidase C2 family. In terms of assembly, forms a heterodimer with a small (regulatory) subunit (CAPNS1). Interacts with CPEB3; this leads to cleavage of CPEB3. Interacts with PIDD1 alternative open reading frame protein altPIDD1. It depends on Ca(2+) as a cofactor. Ubiquitous.

The protein localises to the cytoplasm. The protein resides in the cell membrane. It catalyses the reaction Broad endopeptidase specificity.. With respect to regulation, activated by 200-1000 micromolar concentrations of calcium and inhibited by calpastatin. In terms of biological role, calcium-regulated non-lysosomal thiol-protease which catalyzes limited proteolysis of substrates involved in cytoskeletal remodeling and signal transduction. Proteolytically cleaves MYOC at 'Arg-226'. Proteolytically cleaves CPEB3 following neuronal stimulation which abolishes CPEB3 translational repressor activity, leading to translation of CPEB3 target mRNAs. The sequence is that of Calpain-2 catalytic subunit (CAPN2) from Homo sapiens (Human).